A 264-amino-acid chain; its full sequence is tRNA pseudouridine synthase A (264 aa).

Residue D51 is the Nucleophile of the active site. Residue Y109 participates in substrate binding.

It belongs to the tRNA pseudouridine synthase TruA family. Homodimer.

It carries out the reaction uridine(38/39/40) in tRNA = pseudouridine(38/39/40) in tRNA. Functionally, formation of pseudouridine at positions 38, 39 and 40 in the anticodon stem and loop of transfer RNAs. The chain is tRNA pseudouridine synthase A from Aromatoleum aromaticum (strain DSM 19018 / LMG 30748 / EbN1) (Azoarcus sp. (strain EbN1)).